We begin with the raw amino-acid sequence, 425 residues long: Voltage-dependent calcium channel gamma-8 subunit (425 aa).

The next 4 membrane-spanning stretches (helical) occupy residues 19–39 (VQVLLTTVGAFAAFGLMTIAI), 129–149 (SIFPILSAILLLLGGVCVAAS), 158–178 (IILGAGILFVAAGLSNIIGVI), and 208–228 (FGGLSFILAEVIGVLAVNIYI). 2 positions are modified to phosphoserine: S252 and S255. Positions 272 to 304 (RRSRSSSRSSEPSPSRDASPGGPGGPGFASTDI) are disordered. The segment covering 277–287 (SSRSSEPSPSR) has biased composition (low complexity). A helical transmembrane segment spans residues 318–338 (VAAGLAGAGGGGGGAVGAFGG). Residues 343-354 (AGGGGGGGGGAG) show a composition bias toward gly residues. Disordered stretches follow at residues 343–365 (AGGGGGGGGGAGAERDRGGASGF) and 377–425 (GGGV…TTPV). Residues 387–401 (PPAPPAPAPPAPSAP) show a composition bias toward pro residues. A compositionally biased stretch (polar residues) spans 412-425 (ASNTNTLNRKTTPV).

The protein belongs to the PMP-22/EMP/MP20 family. CACNG subfamily. As to quaternary structure, interacts with CACNA1C. Identified in a complex with the L-type calcium channel subunits CACNA1C, CACNA2D1 and either CACNB1 or CACNB2. Acts as an auxiliary subunit for AMPA-selective glutamate receptors (AMPARs). Found in a complex with GRIA1, GRIA2, GRIA3, GRIA4, CNIH2, CNIH3, CACNG2, CACNG3, CACNG4, CACNG5 and CACNG7. Interacts with CNIH2. Found in a complex with GRIA1, GRIA2, GRIA3, GRIA4, DLG4 and CNIH2. Post-translationally, palmitoylated. Probably palmitoylated by ZDHHC3 and ZDHHC7. As to expression, detected in heart left ventricle.

The protein resides in the cell membrane. It localises to the postsynaptic density membrane. Functionally, regulates the activity of L-type calcium channels that contain CACNA1C as pore-forming subunit. Regulates the trafficking and gating properties of AMPA-selective glutamate receptors (AMPARs). Promotes their targeting to the cell membrane and synapses and modulates their gating properties by slowing their rates of activation, deactivation and desensitization and by mediating their resensitization. Does not show subunit-specific AMPA receptor regulation and regulates all AMPAR subunits. This is Voltage-dependent calcium channel gamma-8 subunit from Homo sapiens (Human).